The chain runs to 160 residues: Large ribosomal subunit protein eL21A (160 aa).

K32 is covalently cross-linked (Glycyl lysine isopeptide (Lys-Gly) (interchain with G-Cter in ubiquitin)).

It belongs to the eukaryotic ribosomal protein eL21 family. As to quaternary structure, component of the large ribosomal subunit (LSU). Mature yeast ribosomes consist of a small (40S) and a large (60S) subunit. The 40S small subunit contains 1 molecule of ribosomal RNA (18S rRNA) and 33 different proteins (encoded by 57 genes). The large 60S subunit contains 3 rRNA molecules (25S, 5.8S and 5S rRNA) and 46 different proteins (encoded by 81 genes).

The protein resides in the cytoplasm. Its function is as follows. Component of the ribosome, a large ribonucleoprotein complex responsible for the synthesis of proteins in the cell. The small ribosomal subunit (SSU) binds messenger RNAs (mRNAs) and translates the encoded message by selecting cognate aminoacyl-transfer RNA (tRNA) molecules. The large subunit (LSU) contains the ribosomal catalytic site termed the peptidyl transferase center (PTC), which catalyzes the formation of peptide bonds, thereby polymerizing the amino acids delivered by tRNAs into a polypeptide chain. The nascent polypeptides leave the ribosome through a tunnel in the LSU and interact with protein factors that function in enzymatic processing, targeting, and the membrane insertion of nascent chains at the exit of the ribosomal tunnel. This is Large ribosomal subunit protein eL21A from Saccharomyces cerevisiae (strain ATCC 204508 / S288c) (Baker's yeast).